The following is a 548-amino-acid chain: Membrane protein insertase YidC (548 aa).

The helical transmembrane segment at 6-26 (NLLVIALLFVSFMIWQAWEQD) threads the bilayer. Residues 28 to 56 (NPQPQTQQTTQTTTTAAGSAADQGVPASG) are disordered. Over residues 29–42 (PQPQTQQTTQTTTT) the composition is skewed to low complexity. The next 4 helical transmembrane spans lie at 350-370 (FVGN…GIMY), 424-444 (FPLI…MGSI), 458-478 (LSAQ…MFFI), and 499-519 (PVIF…YYIV).

This sequence belongs to the OXA1/ALB3/YidC family. Type 1 subfamily. As to quaternary structure, interacts with the Sec translocase complex via SecD. Specifically interacts with transmembrane segments of nascent integral membrane proteins during membrane integration.

The protein resides in the cell inner membrane. In terms of biological role, required for the insertion and/or proper folding and/or complex formation of integral membrane proteins into the membrane. Involved in integration of membrane proteins that insert both dependently and independently of the Sec translocase complex, as well as at least some lipoproteins. Aids folding of multispanning membrane proteins. The protein is Membrane protein insertase YidC of Salmonella agona (strain SL483).